Consider the following 546-residue polypeptide: CTP synthase (546 aa).

Positions 1 to 266 are amidoligase domain; the sequence is MTTRYIFVTG…DQLVTKRFGI (266 aa). Ser-14 contacts CTP. Ser-14 contacts UTP. Residues 15 to 20 and Asp-72 contribute to the ATP site; that span reads SLGKGI. Positions 72 and 140 each coordinate Mg(2+). Residues 147–149, 187–192, and Lys-223 contribute to the CTP site; these read DIE and KTKPTQ. Residues 187-192 and Lys-223 each bind UTP; that span reads KTKPTQ. 239–241 contributes to the ATP binding site; it reads KDV. Positions 291-542 constitute a Glutamine amidotransferase type-1 domain; that stretch reads TIGMVGKYIE…VAAAYTYQKR (252 aa). Gly-352 contacts L-glutamine. Cys-379 (nucleophile; for glutamine hydrolysis) is an active-site residue. L-glutamine contacts are provided by residues 380–383, Glu-403, and Arg-470; that span reads LGMQ. Residues His-515 and Glu-517 contribute to the active site.

The protein belongs to the CTP synthase family. As to quaternary structure, homotetramer.

The catalysed reaction is UTP + L-glutamine + ATP + H2O = CTP + L-glutamate + ADP + phosphate + 2 H(+). It catalyses the reaction L-glutamine + H2O = L-glutamate + NH4(+). The enzyme catalyses UTP + NH4(+) + ATP = CTP + ADP + phosphate + 2 H(+). It functions in the pathway pyrimidine metabolism; CTP biosynthesis via de novo pathway; CTP from UDP: step 2/2. With respect to regulation, allosterically activated by GTP, when glutamine is the substrate; GTP has no effect on the reaction when ammonia is the substrate. The allosteric effector GTP functions by stabilizing the protein conformation that binds the tetrahedral intermediate(s) formed during glutamine hydrolysis. Inhibited by the product CTP, via allosteric rather than competitive inhibition. In terms of biological role, catalyzes the ATP-dependent amination of UTP to CTP with either L-glutamine or ammonia as the source of nitrogen. Regulates intracellular CTP levels through interactions with the four ribonucleotide triphosphates. This chain is CTP synthase, found in Shewanella halifaxensis (strain HAW-EB4).